A 354-amino-acid polypeptide reads, in one-letter code: Holliday junction branch migration complex subunit RuvB (354 aa).

The interval 4–190 (TDKLAAERII…FGIVARLEFY (187 aa)) is large ATPase domain (RuvB-L). ATP is bound by residues Leu29, Arg30, Gly71, Lys74, Thr75, Thr76, 137 to 139 (EDY), Arg180, Tyr190, and Arg227. Thr75 lines the Mg(2+) pocket. Positions 191–261 (NAEELARIVT…VADAALKMLD (71 aa)) are small ATPAse domain (RuvB-S). Positions 264–354 (AVGFDLMDRK…LPGLWDSAAT (91 aa)) are head domain (RuvB-H). Residues Arg300, Arg319, and Arg324 each contribute to the DNA site.

The protein belongs to the RuvB family. Homohexamer. Forms an RuvA(8)-RuvB(12)-Holliday junction (HJ) complex. HJ DNA is sandwiched between 2 RuvA tetramers; dsDNA enters through RuvA and exits via RuvB. An RuvB hexamer assembles on each DNA strand where it exits the tetramer. Each RuvB hexamer is contacted by two RuvA subunits (via domain III) on 2 adjacent RuvB subunits; this complex drives branch migration. In the full resolvosome a probable DNA-RuvA(4)-RuvB(12)-RuvC(2) complex forms which resolves the HJ.

The protein resides in the cytoplasm. It carries out the reaction ATP + H2O = ADP + phosphate + H(+). Functionally, the RuvA-RuvB-RuvC complex processes Holliday junction (HJ) DNA during genetic recombination and DNA repair, while the RuvA-RuvB complex plays an important role in the rescue of blocked DNA replication forks via replication fork reversal (RFR). RuvA specifically binds to HJ cruciform DNA, conferring on it an open structure. The RuvB hexamer acts as an ATP-dependent pump, pulling dsDNA into and through the RuvAB complex. RuvB forms 2 homohexamers on either side of HJ DNA bound by 1 or 2 RuvA tetramers; 4 subunits per hexamer contact DNA at a time. Coordinated motions by a converter formed by DNA-disengaged RuvB subunits stimulates ATP hydrolysis and nucleotide exchange. Immobilization of the converter enables RuvB to convert the ATP-contained energy into a lever motion, pulling 2 nucleotides of DNA out of the RuvA tetramer per ATP hydrolyzed, thus driving DNA branch migration. The RuvB motors rotate together with the DNA substrate, which together with the progressing nucleotide cycle form the mechanistic basis for DNA recombination by continuous HJ branch migration. Branch migration allows RuvC to scan DNA until it finds its consensus sequence, where it cleaves and resolves cruciform DNA. The polypeptide is Holliday junction branch migration complex subunit RuvB (Paraburkholderia phytofirmans (strain DSM 17436 / LMG 22146 / PsJN) (Burkholderia phytofirmans)).